Consider the following 284-residue polypeptide: MNVFQMRDKLKARLKHLDVEFKFDREEETLRIVRIDNHKGVTIKLNAIVAKYEEQKEKIIDEICYYVEEAIAQMGDEVINNVEDIQIMPVIRATSFDKETKEGHAFVLTEHTAETNIYYALDLGKSYRLIDENMLQTLNLTAQQVKEMSLFNVRKLECRYSTDEVKGNIFYFINTNDGYDASRILNTSFLNHIQHQCEGEMLVGVPHQDVLILADIRNKTGYDVMAHLTMEFFTKGLVPITSLSFGYDNGHLEPIFILGKNNKQKRDPNVIQRLEANRKKFKKD.

This sequence belongs to the UPF0354 family.

The protein is UPF0354 protein SERP1303 of Staphylococcus epidermidis (strain ATCC 35984 / DSM 28319 / BCRC 17069 / CCUG 31568 / BM 3577 / RP62A).